We begin with the raw amino-acid sequence, 30 residues long: Antifungal protein Lap (30 aa).

Functionally, displays antifungal activity against M.arachidicola and P.piricola, but not against R.solani, C.gossypii and C.comatus. Inhibits mycelial growth in P.piricola with an IC(50) of 70 nM. Displays very low cell-free translation inhibitory activity in a rabbit reticulocyte lysate system (IC(50)=70 uM) but is able to inhibit HIV-1 reverse transcriptase activity (IC(50)=5.2 nM). The protein is Antifungal protein Lap of Lyophyllum shimeji (Hon-shimeji).